Here is a 138-residue protein sequence, read N- to C-terminus: Acidic phospholipase A2 1 (138 aa).

An N-terminal signal peptide occupies residues 1-16 (MRTLWIMAVLLVGVEG). 7 disulfides stabilise this stretch: C42–C131, C44–C60, C59–C111, C65–C138, C66–C104, C73–C97, and C91–C102. Residues F43, G45, and G47 each coordinate Ca(2+). The active site involves H63. D64 is a binding site for Ca(2+). D105 is an active-site residue.

This sequence belongs to the phospholipase A2 family. Group II subfamily. D49 sub-subfamily. The cofactor is Ca(2+). Expressed by the venom gland.

It localises to the secreted. It carries out the reaction a 1,2-diacyl-sn-glycero-3-phosphocholine + H2O = a 1-acyl-sn-glycero-3-phosphocholine + a fatty acid + H(+). Functionally, snake venom phospholipase A2 (PLA2) that has high lipolytic activity. PLA2 catalyzes the calcium-dependent hydrolysis of the 2-acyl groups in 3-sn-phosphoglycerides. The polypeptide is Acidic phospholipase A2 1 (Craspedocephalus gramineus (Bamboo pit viper)).